We begin with the raw amino-acid sequence, 142 residues long: Midkine (142 aa).

An N-terminal signal peptide occupies residues 1–21; sequence MQPRGLLLLLALLLLAAAAEA. Intrachain disulfides connect cysteine 36–cysteine 60, cysteine 44–cysteine 69, cysteine 51–cysteine 73, cysteine 83–cysteine 115, and cysteine 93–cysteine 125.

The protein belongs to the pleiotrophin family.

It is found in the cell surface. The protein resides in the secreted. The protein localises to the extracellular space. Its subcellular location is the extracellular matrix. It localises to the basement membrane. Has mitogenic activity, and neurite extension activity for PC12 cells. This is Midkine (RIHB) from Gallus gallus (Chicken).